The sequence spans 103 residues: Large ribosomal subunit protein bL21 (103 aa).

It belongs to the bacterial ribosomal protein bL21 family. In terms of assembly, part of the 50S ribosomal subunit. Contacts protein L20.

This protein binds to 23S rRNA in the presence of protein L20. The polypeptide is Large ribosomal subunit protein bL21 (Chromobacterium violaceum (strain ATCC 12472 / DSM 30191 / JCM 1249 / CCUG 213 / NBRC 12614 / NCIMB 9131 / NCTC 9757 / MK)).